The sequence spans 163 residues: Large ribosomal subunit protein uL22c (163 aa).

Belongs to the universal ribosomal protein uL22 family. Part of the 50S ribosomal subunit.

Its subcellular location is the plastid. The protein resides in the chloroplast. Functionally, this protein binds specifically to 23S rRNA. The globular domain of the protein is located near the polypeptide exit tunnel on the outside of the subunit, while an extended beta-hairpin is found that lines the wall of the exit tunnel in the center of the 70S ribosome. The sequence is that of Large ribosomal subunit protein uL22c (rpl22) from Lobularia maritima (Sweet alyssum).